The sequence spans 202 residues: Securin (202 aa).

Residue Ala2 is modified to N-acetylalanine. Residues 35–94 are disordered; the sequence is LDGRSQVSTPRFGKTFDAPPALPKATRKALGTVNRATEKSVKTKGPLKQKQPSFSAKKMT. Positions 61 to 64 match the D-box motif; it reads RKAL. 2 short sequence motifs (TEK-box) span residues 71-73 and 94-96; these read TEK. Positions 163 to 173 match the SH3-binding motif; the sequence is PPSPVRMPSPP. Position 165 is a phosphoserine; by CDK1 (Ser165).

The protein belongs to the securin family. In terms of assembly, interacts with RPS10 and DNAJA1. Interacts with the caspase-like ESPL1, and prevents its protease activity probably by covering its active site. Interacts with TP53 and blocks its activity probably by blocking its binding to DNA. Interacts with the Ku 70 kDa subunit of ds-DNA kinase. Interacts with PTTG1IP. In terms of processing, phosphorylated at Ser-165 by CDK1 during mitosis. Phosphorylated in vitro by ds-DNA kinase. Post-translationally, ubiquitinated through 'Lys-11' linkage of ubiquitin moieties by the anaphase promoting complex (APC) at the onset of anaphase, conducting to its degradation. 'Lys-11'-linked ubiquitination is mediated by the E2 ligase UBE2C/UBCH10.

Its subcellular location is the cytoplasm. The protein resides in the nucleus. In terms of biological role, regulatory protein, which plays a central role in chromosome stability, in the p53/TP53 pathway, and DNA repair. Probably acts by blocking the action of key proteins. During the mitosis, it blocks Separase/ESPL1 function, preventing the proteolysis of the cohesin complex and the subsequent segregation of the chromosomes. At the onset of anaphase, it is ubiquitinated, conducting to its destruction and to the liberation of ESPL1. Its function is however not limited to a blocking activity, since it is required to activate ESPL1. Negatively regulates the transcriptional activity and related apoptosis activity of TP53. The negative regulation of TP53 may explain the strong transforming capability of the protein when it is overexpressed. May also play a role in DNA repair via its interaction with Ku, possibly by connecting DNA damage-response pathways with sister chromatid separation. The sequence is that of Securin (PTTG1) from Gorilla gorilla gorilla (Western lowland gorilla).